The following is a 173-amino-acid chain: Crossover junction endodeoxyribonuclease RuvC (173 aa).

Active-site residues include aspartate 8, glutamate 67, and aspartate 139. 3 residues coordinate Mg(2+): aspartate 8, glutamate 67, and aspartate 139.

Belongs to the RuvC family. Homodimer which binds Holliday junction (HJ) DNA. The HJ becomes 2-fold symmetrical on binding to RuvC with unstacked arms; it has a different conformation from HJ DNA in complex with RuvA. In the full resolvosome a probable DNA-RuvA(4)-RuvB(12)-RuvC(2) complex forms which resolves the HJ. Mg(2+) is required as a cofactor.

The protein resides in the cytoplasm. It carries out the reaction Endonucleolytic cleavage at a junction such as a reciprocal single-stranded crossover between two homologous DNA duplexes (Holliday junction).. Its function is as follows. The RuvA-RuvB-RuvC complex processes Holliday junction (HJ) DNA during genetic recombination and DNA repair. Endonuclease that resolves HJ intermediates. Cleaves cruciform DNA by making single-stranded nicks across the HJ at symmetrical positions within the homologous arms, yielding a 5'-phosphate and a 3'-hydroxyl group; requires a central core of homology in the junction. The consensus cleavage sequence is 5'-(A/T)TT(C/G)-3'. Cleavage occurs on the 3'-side of the TT dinucleotide at the point of strand exchange. HJ branch migration catalyzed by RuvA-RuvB allows RuvC to scan DNA until it finds its consensus sequence, where it cleaves and resolves the cruciform DNA. The chain is Crossover junction endodeoxyribonuclease RuvC from Aliivibrio salmonicida (strain LFI1238) (Vibrio salmonicida (strain LFI1238)).